The following is a 264-amino-acid chain: PDZ domain-containing protein 9 (264 aa).

The 88-residue stretch at 22–109 folds into the PDZ domain; it reads VHNLSKTQQT…GTVLQIKVYR (88 aa).

The sequence is that of PDZ domain-containing protein 9 (PDZD9) from Macaca fascicularis (Crab-eating macaque).